Reading from the N-terminus, the 139-residue chain is MIKGINHITYSVSNIAKSIEFYRDILGADILVEGETSAYFNLGGIWLALNEEKNIPRSEIKYSYTHIAFTISDNDFEDWYIWLKENEVNILEGRDRDIRDKKSIYFTDLDGHKLELHTGSLEDRLSYYKEAKPHMNFYI.

The VOC domain occupies 4-119; the sequence is GINHITYSVS…DGHKLELHTG (116 aa). Residues histidine 7, histidine 66, and glutamate 115 each contribute to the Mg(2+) site. Glutamate 115 functions as the Proton donor/acceptor in the catalytic mechanism.

It belongs to the fosfomycin resistance protein family. FosB subfamily. In terms of assembly, homodimer. It depends on Mg(2+) as a cofactor.

It localises to the cytoplasm. Its function is as follows. Metallothiol transferase which confers resistance to fosfomycin by catalyzing the addition of a thiol cofactor to fosfomycin. L-cysteine is probably the physiological thiol donor. The chain is Metallothiol transferase FosB from Staphylococcus epidermidis.